The primary structure comprises 437 residues: tRNA-2-methylthio-N(6)-dimethylallyladenosine synthase (437 aa).

The 115-residue stretch at Met-1–Ala-115 folds into the MTTase N-terminal domain. [4Fe-4S] cluster is bound by residues Cys-10, Cys-46, Cys-78, Cys-148, Cys-152, and Cys-155. A Radical SAM core domain is found at Lys-134 to Glu-367. The TRAM domain maps to Lys-370–Gly-436.

The protein belongs to the methylthiotransferase family. MiaB subfamily. Monomer. The cofactor is [4Fe-4S] cluster.

It localises to the cytoplasm. The enzyme catalyses N(6)-dimethylallyladenosine(37) in tRNA + (sulfur carrier)-SH + AH2 + 2 S-adenosyl-L-methionine = 2-methylsulfanyl-N(6)-dimethylallyladenosine(37) in tRNA + (sulfur carrier)-H + 5'-deoxyadenosine + L-methionine + A + S-adenosyl-L-homocysteine + 2 H(+). In terms of biological role, catalyzes the methylthiolation of N6-(dimethylallyl)adenosine (i(6)A), leading to the formation of 2-methylthio-N6-(dimethylallyl)adenosine (ms(2)i(6)A) at position 37 in tRNAs that read codons beginning with uridine. The protein is tRNA-2-methylthio-N(6)-dimethylallyladenosine synthase of Helicobacter pylori (strain J99 / ATCC 700824) (Campylobacter pylori J99).